A 137-amino-acid chain; its full sequence is Small heat shock protein IbpA (137 aa).

A sHSP domain is found at 28–137 (SQSNGGYPPY…ANKPRRIEIN (110 aa)).

Belongs to the small heat shock protein (HSP20) family. In terms of assembly, monomer. Forms homomultimers of about 100-150 subunits at optimal growth temperatures. Conformation changes to monomers at high temperatures or high ionic concentrations.

The protein resides in the cytoplasm. In terms of biological role, associates with aggregated proteins, together with IbpB, to stabilize and protect them from irreversible denaturation and extensive proteolysis during heat shock and oxidative stress. Aggregated proteins bound to the IbpAB complex are more efficiently refolded and reactivated by the ATP-dependent chaperone systems ClpB and DnaK/DnaJ/GrpE. Its activity is ATP-independent. The protein is Small heat shock protein IbpA of Salmonella choleraesuis (strain SC-B67).